The primary structure comprises 426 residues: L-cysteine:1D-myo-inositol 2-amino-2-deoxy-alpha-D-glucopyranoside ligase (426 aa).

C45 lines the Zn(2+) pocket. Residues 45–48, T60, and 83–85 contribute to the L-cysteinyl-5'-AMP site; these read CGIT and NVT. Residues 47 to 57 carry the 'HIGH' region motif; sequence ITPYDATHIGH. The 'ERGGDP' region signature appears at 199-204; that stretch reads ERGGDP. W239 provides a ligand contact to L-cysteinyl-5'-AMP. Position 243 (C243) interacts with Zn(2+). Position 261–263 (261–263) interacts with L-cysteinyl-5'-AMP; it reads GSD. H268 contacts Zn(2+). V294 provides a ligand contact to L-cysteinyl-5'-AMP. Residues 300–304 carry the 'KMSKS' region motif; the sequence is KMSKS.

The protein belongs to the class-I aminoacyl-tRNA synthetase family. MshC subfamily. Monomer. Zn(2+) is required as a cofactor.

It carries out the reaction 1D-myo-inositol 2-amino-2-deoxy-alpha-D-glucopyranoside + L-cysteine + ATP = 1D-myo-inositol 2-(L-cysteinylamino)-2-deoxy-alpha-D-glucopyranoside + AMP + diphosphate + H(+). Catalyzes the ATP-dependent condensation of GlcN-Ins and L-cysteine to form L-Cys-GlcN-Ins. This Clavibacter michiganensis subsp. michiganensis (strain NCPPB 382) protein is L-cysteine:1D-myo-inositol 2-amino-2-deoxy-alpha-D-glucopyranoside ligase.